The following is a 161-amino-acid chain: Allophycocyanin alpha chain 1 (161 aa).

Asn-71 bears the N4-methylasparagine mark. Cys-81 is a (2R,3E)-phycocyanobilin binding site.

The protein belongs to the phycobiliprotein family. In terms of assembly, component of the phycobilisome. Heterodimer of an alpha and a beta chain. In terms of processing, contains one covalently linked bilin chromophore.

It is found in the cellular thylakoid membrane. In terms of biological role, light-harvesting photosynthetic bile pigment-protein from the phycobiliprotein complex. Allophycocyanin has a maximum absorption at approximately 650 nanometers. The protein is Allophycocyanin alpha chain 1 of Microchaete diplosiphon (Fremyella diplosiphon).